Reading from the N-terminus, the 1574-residue chain is Multiple epidermal growth factor-like domains protein 6 (1574 aa).

The signal sequence occupies residues methionine 1–alanine 27. An EMI domain is found at methionine 40–serine 122. 99 disulfide bridges follow: cysteine 44–cysteine 108, cysteine 74–cysteine 80, cysteine 107–cysteine 120, cysteine 127–cysteine 138, cysteine 134–cysteine 147, cysteine 149–cysteine 162, cysteine 168–cysteine 179, cysteine 175–cysteine 188, cysteine 190–cysteine 203, cysteine 209–cysteine 220, cysteine 216–cysteine 230, cysteine 232–cysteine 245, cysteine 251–cysteine 262, cysteine 258–cysteine 271, cysteine 273–cysteine 286, cysteine 292–cysteine 303, cysteine 299–cysteine 312, cysteine 314–cysteine 327, cysteine 338–cysteine 349, cysteine 345–cysteine 358, cysteine 360–cysteine 373, cysteine 379–cysteine 389, cysteine 385–cysteine 398, cysteine 400–cysteine 411, cysteine 419–cysteine 430, cysteine 426–cysteine 439, cysteine 441–cysteine 454, cysteine 524–cysteine 537, cysteine 531–cysteine 544, cysteine 546–cysteine 555, cysteine 568–cysteine 580, cysteine 574–cysteine 587, cysteine 589–cysteine 598, cysteine 611–cysteine 623, cysteine 617–cysteine 630, cysteine 632–cysteine 641, cysteine 654–cysteine 668, cysteine 660–cysteine 675, cysteine 677–cysteine 686, cysteine 699–cysteine 711, cysteine 705–cysteine 718, cysteine 722–cysteine 731, cysteine 744–cysteine 755, cysteine 750–cysteine 762, cysteine 764–cysteine 773, cysteine 786–cysteine 799, cysteine 793–cysteine 806, cysteine 808–cysteine 817, cysteine 830–cysteine 842, cysteine 836–cysteine 849, cysteine 851–cysteine 860, cysteine 873–cysteine 886, cysteine 879–cysteine 893, cysteine 895–cysteine 904, cysteine 917–cysteine 929, cysteine 923–cysteine 936, cysteine 938–cysteine 947, cysteine 960–cysteine 972, cysteine 966–cysteine 979, cysteine 981–cysteine 990, cysteine 1003–cysteine 1015, cysteine 1009–cysteine 1022, cysteine 1024–cysteine 1033, cysteine 1046–cysteine 1058, cysteine 1052–cysteine 1065, cysteine 1067–cysteine 1076, cysteine 1089–cysteine 1101, cysteine 1095–cysteine 1108, cysteine 1110–cysteine 1119, cysteine 1132–cysteine 1144, cysteine 1138–cysteine 1151, cysteine 1153–cysteine 1162, cysteine 1175–cysteine 1187, cysteine 1181–cysteine 1194, cysteine 1196–cysteine 1205, cysteine 1218–cysteine 1231, cysteine 1224–cysteine 1238, cysteine 1240–cysteine 1249, cysteine 1262–cysteine 1274, cysteine 1268–cysteine 1281, cysteine 1283–cysteine 1292, cysteine 1305–cysteine 1317, cysteine 1311–cysteine 1324, cysteine 1326–cysteine 1335, cysteine 1348–cysteine 1360, cysteine 1354–cysteine 1367, cysteine 1369–cysteine 1378, cysteine 1391–cysteine 1403, cysteine 1397–cysteine 1410, cysteine 1412–cysteine 1421, cysteine 1434–cysteine 1446, cysteine 1440–cysteine 1453, cysteine 1455–cysteine 1464, cysteine 1477–cysteine 1489, cysteine 1483–cysteine 1496, cysteine 1498–cysteine 1507, cysteine 1520–cysteine 1532, cysteine 1526–cysteine 1539, and cysteine 1541–cysteine 1550. The 41-residue stretch at aspartate 123–glutamine 163 folds into the EGF-like 1; calcium-binding domain. The EGF-like 2; calcium-binding domain maps to aspartate 164–leucine 204. EGF-like domains follow at residues alanine 205 to valine 246 and arginine 247 to glutamate 287. The EGF-like 5; calcium-binding domain maps to aspartate 288 to tyrosine 328. 2 consecutive EGF-like domains span residues isoleucine 334–isoleucine 374 and aspartate 375–glycine 412. One can recognise an EGF-like 8; calcium-binding domain in the interval aspartate 415–threonine 455. 24 consecutive EGF-like domains span residues phenylalanine 520–asparagine 556, phenylalanine 564–glutamate 599, tyrosine 607–histidine 642, phenylalanine 650–glutamine 687, phenylalanine 695–glycine 732, phenylalanine 740–glycine 774, tryptophan 782–glutamine 818, tyrosine 826–glutamine 861, tryptophan 869–glutamate 905, tyrosine 913–glutamate 948, phenylalanine 956–alanine 991, phenylalanine 999–leucine 1034, tyrosine 1042–glutamate 1077, tyrosine 1085–glutamine 1120, phenylalanine 1128–glutamate 1163, phenylalanine 1171–glutamate 1206, phenylalanine 1214–leucine 1250, tyrosine 1258–serine 1293, phenylalanine 1301–glutamate 1336, phenylalanine 1344–glutamate 1379, tyrosine 1387–glutamate 1422, histidine 1430–glutamate 1465, phenylalanine 1473–aspartate 1508, and phenylalanine 1516–arginine 1551. A compositionally biased stretch (polar residues) spans threonine 1555–serine 1568. Residues threonine 1555 to histidine 1574 form a disordered region.

Expressed in lung.

The protein resides in the secreted. This is Multiple epidermal growth factor-like domains protein 6 (Megf6) from Rattus norvegicus (Rat).